Here is a 590-residue protein sequence, read N- to C-terminus: UvrABC system protein C (590 aa).

Residues 14 to 91 form the GIY-YIG domain; that stretch reads DQPGCYLMKD…IKKHDPKYNV (78 aa). The region spanning 196-231 is the UVR domain; it reads NEVKKELEEKMHEAAENLEFERAKELRDQIAHIEST.

The protein belongs to the UvrC family. As to quaternary structure, interacts with UvrB in an incision complex.

The protein resides in the cytoplasm. Functionally, the UvrABC repair system catalyzes the recognition and processing of DNA lesions. UvrC both incises the 5' and 3' sides of the lesion. The N-terminal half is responsible for the 3' incision and the C-terminal half is responsible for the 5' incision. The chain is UvrABC system protein C from Bacillus subtilis (strain 168).